We begin with the raw amino-acid sequence, 327 residues long: MSKVVVCAMYKFVTLAEFEKLQSPLQKVMETSGVKGSLLLAQEGINGTVAGSQSAIDNLLAWLATQPGLDNIVYKLSFDDVMPFYRTKVKLKKEIVTMGVEGIDPKKVVGTYVKPKDWNQLISDPEVLLVDTRNDYEVQIGTFKDALDPKTKTFREFPDYVKQNLDPAKHKKVAMFCTGGIRCEKSTAYLKEQGFDEVFHLEGGILKYLEEVKLEESLWQGECFVFDNRVAVDHNLEKGQYAQCNACRMPITADEMALDSFVQGVSCLHCIDNISEKQRQRFIERERQVQLSKLRGEAHIGSDVSQVIQTRRAKKDRLKKAQHDKSA.

A Rhodanese domain is found at 123-217 (SDPEVLLVDT…YLEEVKLEES (95 aa)). The active-site Cysteine persulfide intermediate is C177.

Belongs to the TrhO family.

It catalyses the reaction uridine(34) in tRNA + AH2 + O2 = 5-hydroxyuridine(34) in tRNA + A + H2O. Its function is as follows. Catalyzes oxygen-dependent 5-hydroxyuridine (ho5U) modification at position 34 in tRNAs. The sequence is that of tRNA uridine(34) hydroxylase from Shewanella pealeana (strain ATCC 700345 / ANG-SQ1).